Here is a 430-residue protein sequence, read N- to C-terminus: Glutamate-1-semialdehyde 2,1-aminomutase (430 aa).

N6-(pyridoxal phosphate)lysine is present on Lys-267.

It belongs to the class-III pyridoxal-phosphate-dependent aminotransferase family. HemL subfamily. As to quaternary structure, homodimer. Pyridoxal 5'-phosphate is required as a cofactor.

It is found in the cytoplasm. It catalyses the reaction (S)-4-amino-5-oxopentanoate = 5-aminolevulinate. Its pathway is porphyrin-containing compound metabolism; protoporphyrin-IX biosynthesis; 5-aminolevulinate from L-glutamyl-tRNA(Glu): step 2/2. In Anaeromyxobacter sp. (strain K), this protein is Glutamate-1-semialdehyde 2,1-aminomutase.